The following is a 339-amino-acid chain: DNA double-strand break repair nuclease NurA (339 aa).

Asp58 and Asp133 together coordinate Mn(2+).

Belongs to the NurA family. As to quaternary structure, homodimer. Forms a complex with HerA. Mn(2+) serves as cofactor.

Nuclease activity requires the presence of HerA. Another report shows endo- and exonuclease activity in the absence of HerA; HerA stimulates the exo- but not endonuclease. LhrC-Core (Hel112) inhibits the exonuclease activity of the HerA-NurA complex on ss- and dsDNA, has no effect on the nicking activity of NurA. Endo- and exonuclease activities are inhibited by ATP; ATP may subtract divalent ions from the reaction preventing nuclease activity, HerA can alleviate ATP inhibition. In terms of biological role, involved in DNA double-strand break (DSB) repair. Probably acts with HerA to stimulate resection of the 5' strand and produce the long 3' single-strand that is required for RadA loading. NurA and HerA together stimulate the end-resection of six nucleotides of a linear DNA substrate. Processes linear double-stranded (ds)DNA probes with 3' or 5' single-stranded overhangs or blunt ends. Has endonuclease activity on single-stranded (ss)DNA and nicking activity on dsDNA without HerA as well as 5'- and 3'-exonuclease activity on ssDNA. Binds ssDNA, dsDNA, forked and bubble DNA equally well. The protein is DNA double-strand break repair nuclease NurA of Saccharolobus solfataricus (strain ATCC 35092 / DSM 1617 / JCM 11322 / P2) (Sulfolobus solfataricus).